Reading from the N-terminus, the 364-residue chain is Dual-specificity RNA methyltransferase RlmN (364 aa).

Catalysis depends on glutamate 91, which acts as the Proton acceptor. Residues 102 to 337 (GTLRITQCLS…AIIRKSKGQD (236 aa)) form the Radical SAM core domain. Cysteine 109 and cysteine 342 are joined by a disulfide. Residues cysteine 116, cysteine 120, and cysteine 123 each coordinate [4Fe-4S] cluster. Residues 169-170 (GE), serine 201, 223-225 (SLH), and asparagine 299 contribute to the S-adenosyl-L-methionine site. Cysteine 342 functions as the S-methylcysteine intermediate in the catalytic mechanism.

It belongs to the radical SAM superfamily. RlmN family. It depends on [4Fe-4S] cluster as a cofactor.

Its subcellular location is the cytoplasm. It carries out the reaction adenosine(2503) in 23S rRNA + 2 reduced [2Fe-2S]-[ferredoxin] + 2 S-adenosyl-L-methionine = 2-methyladenosine(2503) in 23S rRNA + 5'-deoxyadenosine + L-methionine + 2 oxidized [2Fe-2S]-[ferredoxin] + S-adenosyl-L-homocysteine. It catalyses the reaction adenosine(37) in tRNA + 2 reduced [2Fe-2S]-[ferredoxin] + 2 S-adenosyl-L-methionine = 2-methyladenosine(37) in tRNA + 5'-deoxyadenosine + L-methionine + 2 oxidized [2Fe-2S]-[ferredoxin] + S-adenosyl-L-homocysteine. In terms of biological role, specifically methylates position 2 of adenine 2503 in 23S rRNA and position 2 of adenine 37 in tRNAs. m2A2503 modification seems to play a crucial role in the proofreading step occurring at the peptidyl transferase center and thus would serve to optimize ribosomal fidelity. This is Dual-specificity RNA methyltransferase RlmN from Nitratidesulfovibrio vulgaris (strain ATCC 29579 / DSM 644 / CCUG 34227 / NCIMB 8303 / VKM B-1760 / Hildenborough) (Desulfovibrio vulgaris).